The following is a 139-amino-acid chain: Invertebrate-type lysozyme 2 (139 aa).

Positions methionine 1–alanine 18 are cleaved as a signal peptide. Residues aspartate 19–cysteine 138 form the I-type lysozyme domain. 7 disulfide bridges follow: cysteine 20–cysteine 106, cysteine 23–cysteine 138, cysteine 25–cysteine 31, cysteine 36–cysteine 45, cysteine 58–cysteine 86, cysteine 76–cysteine 82, and cysteine 98–cysteine 120. Residue glutamate 28 is the Proton donor of the active site. Aspartate 39 acts as the Nucleophile in catalysis. Lysine 51–aspartate 57 is a substrate binding site. Substrate-binding positions include tyrosine 90 and histidine 113 to glycine 115.

It belongs to the glycosyl hydrolase 22 family. Type-I lysozyme subfamily. Expressed in pharyngeal muscle cell pm3, nerve ring and intestine.

It catalyses the reaction Hydrolysis of (1-&gt;4)-beta-linkages between N-acetylmuramic acid and N-acetyl-D-glucosamine residues in a peptidoglycan and between N-acetyl-D-glucosamine residues in chitodextrins.. Its function is as follows. Has bacteriolytic activity against Gram-positive bacteria. May play a role in resistance to Gram-positive bacterium S.aureus infection. In Caenorhabditis elegans, this protein is Invertebrate-type lysozyme 2.